A 508-amino-acid polypeptide reads, in one-letter code: Photosystem II CP47 reaction center protein (508 aa).

6 helical membrane passes run 21–36 (AVHL…WAGS), 101–115 (IILS…IWHW), 140–156 (GIHL…FGAF), 203–218 (IAAG…FHLS), 237–252 (VLSS…AFVV), and 457–472 (NFAL…HGSR).

Belongs to the PsbB/PsbC family. PsbB subfamily. In terms of assembly, PSII is composed of 1 copy each of membrane proteins PsbA, PsbB, PsbC, PsbD, PsbE, PsbF, PsbH, PsbI, PsbJ, PsbK, PsbL, PsbM, PsbT, PsbX, PsbY, PsbZ, Psb30/Ycf12, at least 3 peripheral proteins of the oxygen-evolving complex and a large number of cofactors. It forms dimeric complexes. The cofactor is Binds multiple chlorophylls. PSII binds additional chlorophylls, carotenoids and specific lipids..

It localises to the plastid. It is found in the chloroplast thylakoid membrane. One of the components of the core complex of photosystem II (PSII). It binds chlorophyll and helps catalyze the primary light-induced photochemical processes of PSII. PSII is a light-driven water:plastoquinone oxidoreductase, using light energy to abstract electrons from H(2)O, generating O(2) and a proton gradient subsequently used for ATP formation. The protein is Photosystem II CP47 reaction center protein of Staurastrum punctulatum (Green alga).